Consider the following 401-residue polypeptide: Chaperone protein DnaJ (401 aa).

A J domain is found at 4-69 (DYYEVLGVSR…DKRRRYDQFG (66 aa)). Residues 156 to 237 (GVEKTLKIKK…CYGEGIKQGD (82 aa)) form a CR-type zinc finger. Positions 169, 172, 185, 188, 211, 214, 225, and 228 each coordinate Zn(2+). 4 CXXCXGXG motif repeats span residues 169–176 (CKECNGSG), 185–192 (CQTCHGSG), 211–218 (CPTCGGEG), and 225–232 (CTACYGEG). The interval 377–401 (AFSPSGSNNDKEEKSFFEKARDIFS) is disordered. Positions 385–401 (NDKEEKSFFEKARDIFS) are enriched in basic and acidic residues.

The protein belongs to the DnaJ family. Homodimer. Zn(2+) serves as cofactor.

It is found in the cytoplasm. Functionally, participates actively in the response to hyperosmotic and heat shock by preventing the aggregation of stress-denatured proteins and by disaggregating proteins, also in an autonomous, DnaK-independent fashion. Unfolded proteins bind initially to DnaJ; upon interaction with the DnaJ-bound protein, DnaK hydrolyzes its bound ATP, resulting in the formation of a stable complex. GrpE releases ADP from DnaK; ATP binding to DnaK triggers the release of the substrate protein, thus completing the reaction cycle. Several rounds of ATP-dependent interactions between DnaJ, DnaK and GrpE are required for fully efficient folding. Also involved, together with DnaK and GrpE, in the DNA replication of plasmids through activation of initiation proteins. This chain is Chaperone protein DnaJ, found in Chlorobium limicola (strain DSM 245 / NBRC 103803 / 6330).